A 475-amino-acid chain; its full sequence is GDP-fucose protein O-fucosyltransferase 3 (475 aa).

Over 1 to 8 the chain is Cytoplasmic; the sequence is MVRMRRKR. Residues 9–29 form a helical; Signal-anchor for type II membrane protein membrane-spanning segment; it reads LWASCICFAAFFFLLVTLQVI. Topologically, residues 30-475 are lumenal; the sequence is TELGNSENKA…QEFWMLVFKQ (446 aa). Residues Asn-107, Asn-165, and Asn-315 are each glycosylated (N-linked (GlcNAc...) asparagine). Cys-386 and Cys-389 are disulfide-bonded. Asn-462 carries an N-linked (GlcNAc...) asparagine glycan.

It belongs to the glycosyltransferase 10 family.

The protein resides in the endoplasmic reticulum membrane. The catalysed reaction is L-threonyl-[protein] + GDP-beta-L-fucose = 3-O-(alpha-L-fucosyl)-L-threonyl-[protein] + GDP + H(+). It carries out the reaction L-seryl-[protein] + GDP-beta-L-fucose = 3-O-(alpha-L-fucosyl)-L-seryl-[protein] + GDP + H(+). Its pathway is protein modification; protein glycosylation. Functionally, protein O-fucosyltransferase that specifically catalyzes O-fucosylation of serine or threonine residues in EMI domains of target proteins. Attaches fucose through an O-glycosidic linkage. O-fucosylation of EMI domain-containing proteins may be required for facilitating protein folding and secretion. The chain is GDP-fucose protein O-fucosyltransferase 3 (FUT10) from Gallus gallus (Chicken).